A 243-amino-acid chain; its full sequence is Myrosinase MB2 (243 aa).

The N-linked (GlcNAc...) asparagine glycan is linked to N30. Residue Y51 coordinates substrate. E125 functions as the Nucleophile in the catalytic mechanism. Substrate is bound by residues W173 and 180–181; that span reads EF. An N-linked (GlcNAc...) asparagine glycan is attached at N216.

It belongs to the glycosyl hydrolase 1 family. As to quaternary structure, homodimer. As to expression, in vacuoles called myrosin grains of a certain class of cells, myrosin cells, distributed in the cotyledons and the axis of the embryo as well as in different organs of the growing plant.

It is found in the vacuole. The catalysed reaction is a thioglucoside + H2O = a sugar + a thiol.. In terms of biological role, degradation of glucosinolates (glucose residue linked by a thioglucoside bound to an amino acid derivative) to glucose, sulfate and any of the products: thiocyanates, isothiocyanates, nitriles, epithionitriles or oxazolidine-2-thiones. This Sinapis alba (White mustard) protein is Myrosinase MB2.